The following is a 1674-amino-acid chain: Kinesin-like protein KIF14 (1674 aa).

Positions 1-391 are required for PRC1-binding; that stretch reads MSVHTSHSRH…TEPDSLKVEN (391 aa). Disordered regions lie at residues 132–158 and 171–374; these read ETLN…KGVN and KDSN…PEEN. 2 stretches are compositionally biased toward polar residues: residues 142–151 and 202–214; these read GSDSASQASR and SRAP…QTEA. Serine 257 carries the post-translational modification Phosphoserine. At threonine 262 the chain carries Phosphothreonine. Over residues 267–279 the composition is skewed to basic and acidic residues; the sequence is VLEHRWTPRHDPP. Residues 302 to 311 show a composition bias toward polar residues; sequence TFRSASSESR. Positions 317-329 are enriched in basic and acidic residues; that stretch reads VPEHRWTPRHDLP. A required for microtubule-binding with high affinity region spans residues 391–772; it reads NSQVTVAVRV…AAQRSNRNID (382 aa). The 344-residue stretch at 393 to 736 folds into the Kinesin motor domain; the sequence is QVTVAVRVRP…LRYATQARLI (344 aa). 482–489 contributes to the ATP binding site; that stretch reads GQTGSGKS. The stretch at 743–826 forms a coiled coil; the sequence is NEDMNAKLIR…QETKELQKAG (84 aa). Residues 860-911 form the FHA domain; sequence TTVGKHTPSSSHDIQLSGVLIADDHCTIRNFGGTVSIVPAGEAKTYVNGTHI. Positions 936-1674 are required for CIT-binding; that stretch reads PVEVQKGKKL…DCTPNRIQWV (739 aa). Residues 961–1110 are a coiled coil; it reads EFAKNELLTA…VQMLQENRGN (150 aa). Phosphoserine is present on residues serine 973 and serine 1326. The tract at residues 1618-1674 is disordered; it reads GLSKPWESCSSNSKEEQCKSDRADCGKSGPRRACEPHGDATPAVSSGDCTPNRIQWV. The span at 1630 to 1642 shows a compositional bias: basic and acidic residues; that stretch reads SKEEQCKSDRADC. A compositionally biased stretch (polar residues) spans 1660–1674; it reads AVSSGDCTPNRIQWV.

Belongs to the TRAFAC class myosin-kinesin ATPase superfamily. Kinesin family. Directly interacts with PRC1 within a complex also containing KIF4A, KIF20A and KIF23; targets to the central spindle. Directly interacts with CIT depending on the activation state of the kinase (stronger interaction with the kinase-dead form); targets to the midbody. Interacts with ARRB2; the interaction is detected in the nucleus upon OR1D2 stimulation. Interacts with AKT1; the interaction is detected in the plasma membrane upon INS stimulation and promotes AKT1 phosphorylation. Interacts with SVIL; at midbody during cytokinesis. Interacts with RADIL (via PDZ domain); recruits RADIL to the microtubule network restricting RADIL from interaction with activated RAP1A.

It localises to the nucleus. The protein localises to the cytoplasm. It is found in the cytoskeleton. The protein resides in the spindle. Its subcellular location is the midbody. Functionally, microtubule motor protein that binds to microtubules with high affinity through each tubulin heterodimer and has an ATPase activity. Plays a role in many processes like cell division, cytokinesis and also in cell proliferation and apoptosis. During cytokinesis, targets to central spindle and midbody through its interaction with PRC1 and CIT respectively. Regulates cell growth through regulation of cell cycle progression and cytokinesis. During cell cycle progression acts through SCF-dependent proteasomal ubiquitin-dependent protein catabolic process which controls CDKN1B degradation, resulting in positive regulation of cyclins, including CCNE1, CCND1 and CCNB1. During late neurogenesis, regulates the cerebellar and cerebral cortex development and olfactory bulb development through regulation of apoptosis, cell proliferation and cell division. Also is required for chromosome congression and alignment during mitotic cell cycle process. Regulates cell spreading, focal adhesion dynamics, and cell migration through its interaction with RADIL resulting in regulation of RAP1A-mediated inside-out integrin activation by tethering RADIL on microtubules. In Mus musculus (Mouse), this protein is Kinesin-like protein KIF14.